Consider the following 210-residue polypeptide: ATP-dependent Clp protease proteolytic subunit (210 aa).

Serine 111 (nucleophile) is an active-site residue. Histidine 136 is a catalytic residue.

Belongs to the peptidase S14 family. As to quaternary structure, fourteen ClpP subunits assemble into 2 heptameric rings which stack back to back to give a disk-like structure with a central cavity, resembling the structure of eukaryotic proteasomes.

The protein resides in the cytoplasm. It catalyses the reaction Hydrolysis of proteins to small peptides in the presence of ATP and magnesium. alpha-casein is the usual test substrate. In the absence of ATP, only oligopeptides shorter than five residues are hydrolyzed (such as succinyl-Leu-Tyr-|-NHMec, and Leu-Tyr-Leu-|-Tyr-Trp, in which cleavage of the -Tyr-|-Leu- and -Tyr-|-Trp bonds also occurs).. In terms of biological role, cleaves peptides in various proteins in a process that requires ATP hydrolysis. Has a chymotrypsin-like activity. Plays a major role in the degradation of misfolded proteins. This Halorhodospira halophila (strain DSM 244 / SL1) (Ectothiorhodospira halophila (strain DSM 244 / SL1)) protein is ATP-dependent Clp protease proteolytic subunit.